A 780-amino-acid polypeptide reads, in one-letter code: Reticulon-1 (780 aa).

Disordered stretches follow at residues 1-76, 128-176, 201-223, and 293-576; these read MAAP…VAME, QKEN…AEST, RPQE…LDFK, and MTAT…IPGP. A phosphoserine mark is found at Ser13 and Ser70. Position 327 is a phosphoserine (Ser327). Residues 328–341 show a composition bias toward low complexity; sequence PGSVTPPSSGTEPS. A phosphoserine mark is found at Ser350, Ser352, and Ser487. Residues 497–512 are compositionally biased toward basic and acidic residues; sequence AIREETGSRATEERAP. Residues 593–780 form the Reticulon domain; the sequence is AIDLLYWRDI…KIPGAKRHAE (188 aa). 2 consecutive transmembrane segments (helical) span residues 607–627 and 709–729; these read IVFG…VVSV and FAVL…LTLL.

In terms of assembly, interacts with NDRG1. Interacts with BACE1. Interacts with TMEM33.

It is found in the endoplasmic reticulum membrane. The protein resides in the golgi apparatus membrane. Inhibits amyloid precursor protein processing, probably by blocking BACE1 activity. This Mus musculus (Mouse) protein is Reticulon-1 (Rtn1).